Consider the following 433-residue polypeptide: GTPase Obg (433 aa).

Positions 1 to 159 constitute an Obg domain; that stretch reads MKFVDSADLI…FEIRAELKVL (159 aa). The OBG-type G domain maps to 160–332; the sequence is ADVGFVGLPN…LLFMIYEELK (173 aa). GTP contacts are provided by residues 166–173, 191–195, 213–216, 284–287, and 313–315; these read GLPNAGKS, FTTIT, DLPG, NKMD, and SGL. Residues S173 and T193 each contribute to the Mg(2+) site. The OCT domain maps to 355 to 433; sequence KFEEQKEDIQ…VFDYELEWTD (79 aa).

It belongs to the TRAFAC class OBG-HflX-like GTPase superfamily. OBG GTPase family. In terms of assembly, monomer. Mg(2+) is required as a cofactor.

It localises to the cytoplasm. In terms of biological role, an essential GTPase which binds GTP, GDP and possibly (p)ppGpp with moderate affinity, with high nucleotide exchange rates and a fairly low GTP hydrolysis rate. Plays a role in control of the cell cycle, stress response, ribosome biogenesis and in those bacteria that undergo differentiation, in morphogenesis control. This Mycoplasma mycoides subsp. mycoides SC (strain CCUG 32753 / NCTC 10114 / PG1) protein is GTPase Obg.